Here is a 311-residue protein sequence, read N- to C-terminus: Probable manganese-dependent inorganic pyrophosphatase (311 aa).

Residues His9, Asp13, Asp15, Asp77, His99, and Asp151 each contribute to the Mn(2+) site.

This sequence belongs to the PPase class C family. Mn(2+) serves as cofactor.

It is found in the cytoplasm. It carries out the reaction diphosphate + H2O = 2 phosphate + H(+). The polypeptide is Probable manganese-dependent inorganic pyrophosphatase (Streptococcus suis (strain 98HAH33)).